The chain runs to 130 residues: Small ribosomal subunit protein uS11 (130 aa).

This sequence belongs to the universal ribosomal protein uS11 family. Part of the 30S ribosomal subunit. Interacts with proteins S7 and S18. Binds to IF-3.

In terms of biological role, located on the platform of the 30S subunit, it bridges several disparate RNA helices of the 16S rRNA. Forms part of the Shine-Dalgarno cleft in the 70S ribosome. The protein is Small ribosomal subunit protein uS11 of Tropheryma whipplei (strain TW08/27) (Whipple's bacillus).